We begin with the raw amino-acid sequence, 94 residues long: Cystatin-A3 (94 aa).

The Secondary area of contact signature appears at 46 to 50 (QLVNG).

It belongs to the cystatin family.

It is found in the cytoplasm. Its function is as follows. Intracellular thiol proteinase inhibitor. The protein is Cystatin-A3 (cpiC) of Dictyostelium discoideum (Social amoeba).